The sequence spans 111 residues: Prothymosin alpha (111 aa).

An N-acetylmethionine modification is found at Met-1. A disordered region spans residues 1 to 111 (MSDAAVDTSS…TKKQKTDEDD (111 aa)). Ser-2 carries the N-acetylserine; in Prothymosin alpha, N-terminally processed modification. Position 2 is a phosphoserine (Ser-2). Thr-8 is modified (phosphothreonine). Phosphoserine occurs at positions 9 and 10. A phosphothreonine mark is found at Thr-13 and Thr-14. Positions 13 to 31 (TTKDLKEKKEVVEEAENGR) are enriched in basic and acidic residues. The residue at position 15 (Lys-15) is an N6-acetyllysine; alternate. N6-succinyllysine; alternate is present on Lys-15. Residues 40–84 (ENEENGEQEADNEVDEEEEEGGEEEEEEEEGDGEEEDGDEDEEAE) show a composition bias toward acidic residues. Over residues 101-111 (DTKKQKTDEDD) the composition is skewed to basic and acidic residues. Thr-102 carries the phosphothreonine modification. At Lys-103 the chain carries N6-acetyllysine; alternate. A Glycyl lysine isopeptide (Lys-Gly) (interchain with G-Cter in SUMO2); alternate cross-link involves residue Lys-103. Thr-107 bears the Phosphothreonine mark.

It belongs to the pro/parathymosin family. Interacts with NUPR1; regulates apoptotic process. Covalently linked to a small RNA of about 20 nucleotides.

Its subcellular location is the nucleus. Functionally, prothymosin alpha may mediate immune function by conferring resistance to certain opportunistic infections. This is Prothymosin alpha (PTMA) from Homo sapiens (Human).